The sequence spans 986 residues: Isoleucine--tRNA ligase (986 aa).

A 'KMSKS' region motif is present at residues 534–538; that stretch reads EMHKS. Lysine 537 lines the ATP pocket.

Belongs to the class-I aminoacyl-tRNA synthetase family. IleS type 2 subfamily. Monomer. Zn(2+) is required as a cofactor.

It is found in the cytoplasm. The enzyme catalyses tRNA(Ile) + L-isoleucine + ATP = L-isoleucyl-tRNA(Ile) + AMP + diphosphate. Catalyzes the attachment of isoleucine to tRNA(Ile). As IleRS can inadvertently accommodate and process structurally similar amino acids such as valine, to avoid such errors it has two additional distinct tRNA(Ile)-dependent editing activities. One activity is designated as 'pretransfer' editing and involves the hydrolysis of activated Val-AMP. The other activity is designated 'posttransfer' editing and involves deacylation of mischarged Val-tRNA(Ile). The polypeptide is Isoleucine--tRNA ligase (ileS) (Saccharolobus solfataricus (strain ATCC 35092 / DSM 1617 / JCM 11322 / P2) (Sulfolobus solfataricus)).